A 364-amino-acid polypeptide reads, in one-letter code: UDP-N-acetylglucosamine--N-acetylmuramyl-(pentapeptide) pyrophosphoryl-undecaprenol N-acetylglucosamine transferase (364 aa).

Residues 13-15 (TGG), asparagine 125, arginine 165, serine 192, and glutamine 293 each bind UDP-N-acetyl-alpha-D-glucosamine.

This sequence belongs to the glycosyltransferase 28 family. MurG subfamily.

It is found in the cell inner membrane. The enzyme catalyses di-trans,octa-cis-undecaprenyl diphospho-N-acetyl-alpha-D-muramoyl-L-alanyl-D-glutamyl-meso-2,6-diaminopimeloyl-D-alanyl-D-alanine + UDP-N-acetyl-alpha-D-glucosamine = di-trans,octa-cis-undecaprenyl diphospho-[N-acetyl-alpha-D-glucosaminyl-(1-&gt;4)]-N-acetyl-alpha-D-muramoyl-L-alanyl-D-glutamyl-meso-2,6-diaminopimeloyl-D-alanyl-D-alanine + UDP + H(+). It participates in cell wall biogenesis; peptidoglycan biosynthesis. Its function is as follows. Cell wall formation. Catalyzes the transfer of a GlcNAc subunit on undecaprenyl-pyrophosphoryl-MurNAc-pentapeptide (lipid intermediate I) to form undecaprenyl-pyrophosphoryl-MurNAc-(pentapeptide)GlcNAc (lipid intermediate II). This Cereibacter sphaeroides (strain ATCC 17025 / ATH 2.4.3) (Rhodobacter sphaeroides) protein is UDP-N-acetylglucosamine--N-acetylmuramyl-(pentapeptide) pyrophosphoryl-undecaprenol N-acetylglucosamine transferase.